The chain runs to 711 residues: Polyribonucleotide nucleotidyltransferase (711 aa).

The Mg(2+) site is built by Asp-486 and Asp-492. The KH domain maps to 553-612; it reads PRIHTIKINPDKIKDVIGKGGSVIRALTEETGTTIEIEDDGTVKIAATDGEKAKHAIRRI. One can recognise an S1 motif domain in the interval 622-690; it reads GRVYTGKVTR…RQGRIRLSIK (69 aa). The segment at 689–711 is disordered; sequence IKEATEQSQPAAAPEAPAAEQGE. Residues 694–711 are compositionally biased toward low complexity; that stretch reads EQSQPAAAPEAPAAEQGE.

The protein belongs to the polyribonucleotide nucleotidyltransferase family. In terms of assembly, component of the RNA degradosome, which is a multiprotein complex involved in RNA processing and mRNA degradation. The cofactor is Mg(2+).

Its subcellular location is the cytoplasm. The enzyme catalyses RNA(n+1) + phosphate = RNA(n) + a ribonucleoside 5'-diphosphate. Involved in mRNA degradation. Catalyzes the phosphorolysis of single-stranded polyribonucleotides processively in the 3'- to 5'-direction. The protein is Polyribonucleotide nucleotidyltransferase of Escherichia coli (strain ATCC 8739 / DSM 1576 / NBRC 3972 / NCIMB 8545 / WDCM 00012 / Crooks).